A 300-amino-acid polypeptide reads, in one-letter code: MSYRELVVELAREHAEALSDALLELGALSVSVEDADADTPDEQPLFGEPGLVPERTAWQHSRVIALLSPDHEPAVLLAAAANEIGLDATPKFDVREVEEQDWVRLTQSQFEPIPIGERIWVVPSWHDAPDPDALVLELDPGLAFGTGSHPTTRLCMEWLEQSVQPGQSVLDYGCGSGILAILAKKCGANPVVGIDIDPQAVESARQNSERNRAEVTYGLPDACPAGEFDIVVANILSNPLKLMASMLASKVKPGGRIALSGVLARQADEVAAVYARYVDISVWREHEGWVCLAGTRRESH.

S-adenosyl-L-methionine contacts are provided by Thr-152, Gly-173, Asp-195, and Asn-234.

It belongs to the methyltransferase superfamily. PrmA family.

Its subcellular location is the cytoplasm. It carries out the reaction L-lysyl-[protein] + 3 S-adenosyl-L-methionine = N(6),N(6),N(6)-trimethyl-L-lysyl-[protein] + 3 S-adenosyl-L-homocysteine + 3 H(+). In terms of biological role, methylates ribosomal protein L11. The chain is Ribosomal protein L11 methyltransferase from Burkholderia multivorans (strain ATCC 17616 / 249).